Reading from the N-terminus, the 167-residue chain is 3-dehydroquinate dehydratase (167 aa).

Tyr22 functions as the Proton acceptor in the catalytic mechanism. Positions 76, 82, and 89 each coordinate substrate. His102 serves as the catalytic Proton donor. Substrate contacts are provided by residues 103 to 104 and Arg113; that span reads LT.

Belongs to the type-II 3-dehydroquinase family. In terms of assembly, homododecamer.

The enzyme catalyses 3-dehydroquinate = 3-dehydroshikimate + H2O. It functions in the pathway metabolic intermediate biosynthesis; chorismate biosynthesis; chorismate from D-erythrose 4-phosphate and phosphoenolpyruvate: step 3/7. Functionally, catalyzes a trans-dehydration via an enolate intermediate. The polypeptide is 3-dehydroquinate dehydratase (Helicobacter pylori (strain Shi470)).